A 234-amino-acid chain; its full sequence is Endonuclease NucS (234 aa).

Belongs to the NucS endonuclease family.

It localises to the cytoplasm. Functionally, cleaves both 3' and 5' ssDNA extremities of branched DNA structures. The sequence is that of Endonuclease NucS from Bifidobacterium adolescentis (strain ATCC 15703 / DSM 20083 / NCTC 11814 / E194a).